The following is a 684-amino-acid chain: Agnestins biosynthesis cluster transcription factor AgnL11 (684 aa).

The zn(2)-C6 fungal-type DNA-binding region spans 25–51; sequence CHFCRTKKLKCDRRFPCSNCRARRLSC. Residues 76–103 are a coiled coil; it reads NEELSENINELKARLQRLEELISVNAEE. Residues 601–644 form a disordered region; the sequence is KGSASARKDKNPIHGDTDRATPPGSSNLPQHDKSSSSSPAPPVW. The span at 606–619 shows a compositional bias: basic and acidic residues; it reads ARKDKNPIHGDTDR.

It is found in the nucleus. Its function is as follows. Transcription factor that regulates the expression of the gene cluster that mediates the biosynthesis of agnestins, dihydroxy-xanthone metabolites. This Paecilomyces divaricatus (Penicillium divaricatum) protein is Agnestins biosynthesis cluster transcription factor AgnL11.